The primary structure comprises 68 residues: MLCLPVFIILLLLASPAAPKSLETRIQNDLIRAGLTDADLKTEKGFLSGLLNVADSVCCKVDTSCCSN.

The first 19 residues, M1–P19, serve as a signal peptide directing secretion. The propeptide occupies K20–A54.

This sequence belongs to the conotoxin T superfamily. Post-translationally, contains 2 disulfide bonds that can be either 'C1-C3, C2-C4' or 'C1-C4, C2-C3', since these disulfide connectivities have been observed for conotoxins with cysteine framework V (for examples, see AC P0DQQ7 and AC P81755). Expressed by the venom duct.

It localises to the secreted. In Conus litteratus (Lettered cone), this protein is Conotoxin Lt5.11.